The primary structure comprises 268 residues: Tryptophan synthase alpha chain (268 aa).

Active-site proton acceptor residues include glutamate 49 and aspartate 60.

The protein belongs to the TrpA family. As to quaternary structure, tetramer of two alpha and two beta chains.

It carries out the reaction (1S,2R)-1-C-(indol-3-yl)glycerol 3-phosphate + L-serine = D-glyceraldehyde 3-phosphate + L-tryptophan + H2O. It functions in the pathway amino-acid biosynthesis; L-tryptophan biosynthesis; L-tryptophan from chorismate: step 5/5. In terms of biological role, the alpha subunit is responsible for the aldol cleavage of indoleglycerol phosphate to indole and glyceraldehyde 3-phosphate. This chain is Tryptophan synthase alpha chain, found in Yersinia enterocolitica serotype O:8 / biotype 1B (strain NCTC 13174 / 8081).